We begin with the raw amino-acid sequence, 502 residues long: UDP-N-acetylglucosamine diphosphorylase 2 (502 aa).

A Substrate binding motif is present at residues 130-133; sequence LSGG. Asn250 lines the substrate pocket. The Substrate binding motif lies at 332 to 333; it reads EY. Lys429 lines the substrate pocket.

Belongs to the UDPGP type 1 family. Monomer. Mg(2+) serves as cofactor. The cofactor is Mn(2+). In terms of tissue distribution, expressed in root tips, stipules, lateral root primordia, immature anthers and at the branching points of the flowering shoots.

The protein localises to the cytoplasm. It carries out the reaction N-acetyl-alpha-D-glucosamine 1-phosphate + UTP + H(+) = UDP-N-acetyl-alpha-D-glucosamine + diphosphate. The catalysed reaction is N-acetyl-alpha-D-galactosamine 1-phosphate + UTP + H(+) = UDP-N-acetyl-alpha-D-galactosamine + diphosphate. It catalyses the reaction alpha-D-glucose 1-phosphate + UTP + H(+) = UDP-alpha-D-glucose + diphosphate. The protein operates within nucleotide-sugar biosynthesis; UDP-N-acetyl-alpha-D-glucosamine biosynthesis; UDP-N-acetyl-alpha-D-glucosamine from N-acetyl-alpha-D-glucosamine 1-phosphate: step 1/1. Its function is as follows. Uridylyltransferase involved in the biosynthesis of UDP-glucosamine, an essential precursor for glycoprotein and glycolipid synthesis. Can use UDP-glucosamine, the 4-epimer UDP-galactosamine and UDP-glucose as substrates. Acts redundantly with GLCNAC1PUT1. Required for gametogenesis and embryo development. The protein is UDP-N-acetylglucosamine diphosphorylase 2 (GLCNAC1PUT2) of Arabidopsis thaliana (Mouse-ear cress).